The following is a 134-amino-acid chain: uncharacterized protein (134 aa).

It belongs to the ycf68 family.

Its subcellular location is the plastid. It localises to the chloroplast. This is an uncharacterized protein from Saccharum hybrid (Sugarcane).